The chain runs to 240 residues: MNERSTPQALTGPVIRAESLGKTYSEGKLLTQVFDGLDLQVMRGETVAIVGASGAGKSTLLHLLGGLDVPTAGEVYVAGQRMSALSDGDRGRLRNKTLGFIYQFHHLLPEFTALENVMMPVLLSGQSVCSAKMRAQMLLEAVELGHRLNHKPSELSGGERQRAAVARALANSPDCVLGDEPTGNLDNRTASTVFELMLELNRAQRTSLVLVTHDRGLARCLDRVLELYQGGLRELTSAEV.

The ABC transporter domain maps to 15 to 240 (IRAESLGKTY…GLRELTSAEV (226 aa)). 51-58 (GASGAGKS) serves as a coordination point for ATP.

This sequence belongs to the ABC transporter superfamily. Lipoprotein translocase (TC 3.A.1.125) family. In terms of assembly, the complex is composed of two ATP-binding proteins (LolD) and two transmembrane proteins (LolC and LolE).

It is found in the cell inner membrane. In terms of biological role, part of the ABC transporter complex LolCDE involved in the translocation of mature outer membrane-directed lipoproteins, from the inner membrane to the periplasmic chaperone, LolA. Responsible for the formation of the LolA-lipoprotein complex in an ATP-dependent manner. The chain is Lipoprotein-releasing system ATP-binding protein LolD from Xylella fastidiosa (strain Temecula1 / ATCC 700964).